The primary structure comprises 204 residues: Thioredoxin-like 4, chloroplastic (204 aa).

A chloroplast-targeting transit peptide spans 1–27 (MSSLLNISHCSYHGYSGLTSRGGINTV). The Thioredoxin domain maps to 63–201 (AKSLSQENLV…IDAAILKYTS (139 aa)). Catalysis depends on nucleophile residues Cys-119 and Cys-122. Cysteines 119 and 122 form a disulfide.

Belongs to the thioredoxin family.

It localises to the plastid. The protein localises to the chloroplast. Its function is as follows. Probable thiol-disulfide oxidoreductase that may participate in various redox reactions. This Arabidopsis thaliana (Mouse-ear cress) protein is Thioredoxin-like 4, chloroplastic.